The chain runs to 143 residues: Putative pre-16S rRNA nuclease (143 aa).

This sequence belongs to the YqgF nuclease family.

It is found in the cytoplasm. Functionally, could be a nuclease involved in processing of the 5'-end of pre-16S rRNA. The polypeptide is Putative pre-16S rRNA nuclease (Leuconostoc mesenteroides subsp. mesenteroides (strain ATCC 8293 / DSM 20343 / BCRC 11652 / CCM 1803 / JCM 6124 / NCDO 523 / NBRC 100496 / NCIMB 8023 / NCTC 12954 / NRRL B-1118 / 37Y)).